Reading from the N-terminus, the 243-residue chain is 3-deoxy-manno-octulosonate cytidylyltransferase (243 aa).

Belongs to the KdsB family.

The protein resides in the cytoplasm. It catalyses the reaction 3-deoxy-alpha-D-manno-oct-2-ulosonate + CTP = CMP-3-deoxy-beta-D-manno-octulosonate + diphosphate. It functions in the pathway nucleotide-sugar biosynthesis; CMP-3-deoxy-D-manno-octulosonate biosynthesis; CMP-3-deoxy-D-manno-octulosonate from 3-deoxy-D-manno-octulosonate and CTP: step 1/1. Its pathway is bacterial outer membrane biogenesis; lipopolysaccharide biosynthesis. Activates KDO (a required 8-carbon sugar) for incorporation into bacterial lipopolysaccharide in Gram-negative bacteria. The polypeptide is 3-deoxy-manno-octulosonate cytidylyltransferase (Helicobacter acinonychis (strain Sheeba)).